The sequence spans 257 residues: Isoprenyl transferase (257 aa).

Residue Asp-34 is part of the active site. A Mg(2+)-binding site is contributed by Asp-34. Substrate is bound by residues 35–38 (GNGR), Trp-39, Arg-47, His-51, and 79–81 (STE). Asn-82 acts as the Proton acceptor in catalysis. Substrate contacts are provided by residues Trp-83, Arg-85, Arg-202, and 208-210 (RLS). Position 221 (Glu-221) interacts with Mg(2+).

Belongs to the UPP synthase family. In terms of assembly, homodimer. Requires Mg(2+) as cofactor.

Its function is as follows. Catalyzes the condensation of isopentenyl diphosphate (IPP) with allylic pyrophosphates generating different type of terpenoids. This is Isoprenyl transferase from Geobacillus kaustophilus (strain HTA426).